The sequence spans 314 residues: tRNA pseudouridine synthase B (314 aa).

Residue histidine 43 participates in substrate binding. Aspartate 48 (nucleophile) is an active-site residue. Tyrosine 76, tyrosine 179, and leucine 200 together coordinate substrate.

Belongs to the pseudouridine synthase TruB family. Type 1 subfamily.

It carries out the reaction uridine(55) in tRNA = pseudouridine(55) in tRNA. In terms of biological role, responsible for synthesis of pseudouridine from uracil-55 in the psi GC loop of transfer RNAs. The polypeptide is tRNA pseudouridine synthase B (Escherichia coli O157:H7).